The primary structure comprises 443 residues: uncharacterized protein (443 aa).

4 helical membrane-spanning segments follow: residues 15 to 35 (IYAG…DGLA), 38 to 58 (LGMA…GPGS), 59 to 79 (AWQG…LSWL), and 181 to 201 (VVTA…IPAL). Residues 231–270 (NFGIGNIGNANLGNGNIGNANLGSGNAGFFNFGNGNDGNT) form a 4 X 10 AA approximate repeats region.

Belongs to the mycobacterial PPE family.

It is found in the cell membrane. This is an uncharacterized protein from Mycobacterium tuberculosis (strain ATCC 25618 / H37Rv).